A 92-amino-acid chain; its full sequence is Small ribosomal subunit protein uS17 (92 aa).

This sequence belongs to the universal ribosomal protein uS17 family. As to quaternary structure, part of the 30S ribosomal subunit.

One of the primary rRNA binding proteins, it binds specifically to the 5'-end of 16S ribosomal RNA. This chain is Small ribosomal subunit protein uS17, found in Cupriavidus metallidurans (strain ATCC 43123 / DSM 2839 / NBRC 102507 / CH34) (Ralstonia metallidurans).